We begin with the raw amino-acid sequence, 101 residues long: Small ribosomal subunit protein uS10 (101 aa).

It belongs to the universal ribosomal protein uS10 family. In terms of assembly, part of the 30S ribosomal subunit.

Functionally, involved in the binding of tRNA to the ribosomes. This chain is Small ribosomal subunit protein uS10, found in Mycobacterium bovis (strain ATCC BAA-935 / AF2122/97).